The following is a 301-amino-acid chain: Phosphatidylserine decarboxylase proenzyme (301 aa).

Residues aspartate 117, histidine 173, and serine 260 each act as charge relay system; for autoendoproteolytic cleavage activity in the active site. The active-site Schiff-base intermediate with substrate; via pyruvic acid; for decarboxylase activity is the serine 260. The residue at position 260 (serine 260) is a Pyruvic acid (Ser); by autocatalysis.

Belongs to the phosphatidylserine decarboxylase family. PSD-B subfamily. Prokaryotic type II sub-subfamily. In terms of assembly, heterodimer of a large membrane-associated beta subunit and a small pyruvoyl-containing alpha subunit. It depends on pyruvate as a cofactor. Post-translationally, is synthesized initially as an inactive proenzyme. Formation of the active enzyme involves a self-maturation process in which the active site pyruvoyl group is generated from an internal serine residue via an autocatalytic post-translational modification. Two non-identical subunits are generated from the proenzyme in this reaction, and the pyruvate is formed at the N-terminus of the alpha chain, which is derived from the carboxyl end of the proenzyme. The autoendoproteolytic cleavage occurs by a canonical serine protease mechanism, in which the side chain hydroxyl group of the serine supplies its oxygen atom to form the C-terminus of the beta chain, while the remainder of the serine residue undergoes an oxidative deamination to produce ammonia and the pyruvoyl prosthetic group on the alpha chain. During this reaction, the Ser that is part of the protease active site of the proenzyme becomes the pyruvoyl prosthetic group, which constitutes an essential element of the active site of the mature decarboxylase.

It localises to the cell membrane. It carries out the reaction a 1,2-diacyl-sn-glycero-3-phospho-L-serine + H(+) = a 1,2-diacyl-sn-glycero-3-phosphoethanolamine + CO2. It functions in the pathway phospholipid metabolism; phosphatidylethanolamine biosynthesis; phosphatidylethanolamine from CDP-diacylglycerol: step 2/2. In terms of biological role, catalyzes the formation of phosphatidylethanolamine (PtdEtn) from phosphatidylserine (PtdSer). This Chlamydia trachomatis serovar L2 (strain ATCC VR-902B / DSM 19102 / 434/Bu) protein is Phosphatidylserine decarboxylase proenzyme.